A 70-amino-acid chain; its full sequence is Sec-independent protein translocase protein TatA (70 aa).

The chain crosses the membrane as a helical span at residues Met1–Gly21. Residues Glu47–Gly70 form a disordered region. Residues Pro57 to Gly70 are compositionally biased toward basic and acidic residues.

It belongs to the TatA/E family. Forms a complex with TatC.

The protein resides in the cell inner membrane. Its function is as follows. Part of the twin-arginine translocation (Tat) system that transports large folded proteins containing a characteristic twin-arginine motif in their signal peptide across membranes. TatA could form the protein-conducting channel of the Tat system. This Prosthecochloris aestuarii (strain DSM 271 / SK 413) protein is Sec-independent protein translocase protein TatA.